The chain runs to 369 residues: tRNA 2-selenouridine synthase (369 aa).

The region spanning Phe12 to Arg136 is the Rhodanese domain. Cys95 acts as the S-selanylcysteine intermediate in catalysis.

This sequence belongs to the SelU family. In terms of assembly, monomer.

The catalysed reaction is 5-methylaminomethyl-2-thiouridine(34) in tRNA + selenophosphate + (2E)-geranyl diphosphate + H2O + H(+) = 5-methylaminomethyl-2-selenouridine(34) in tRNA + (2E)-thiogeraniol + phosphate + diphosphate. It carries out the reaction 5-methylaminomethyl-2-thiouridine(34) in tRNA + (2E)-geranyl diphosphate = 5-methylaminomethyl-S-(2E)-geranyl-thiouridine(34) in tRNA + diphosphate. The enzyme catalyses 5-methylaminomethyl-S-(2E)-geranyl-thiouridine(34) in tRNA + selenophosphate + H(+) = 5-methylaminomethyl-2-(Se-phospho)selenouridine(34) in tRNA + (2E)-thiogeraniol. It catalyses the reaction 5-methylaminomethyl-2-(Se-phospho)selenouridine(34) in tRNA + H2O = 5-methylaminomethyl-2-selenouridine(34) in tRNA + phosphate. Functionally, involved in the post-transcriptional modification of the uridine at the wobble position (U34) of tRNA(Lys), tRNA(Glu) and tRNA(Gln). Catalyzes the conversion of 2-thiouridine (S2U-RNA) to 2-selenouridine (Se2U-RNA). Acts in a two-step process involving geranylation of 2-thiouridine (S2U) to S-geranyl-2-thiouridine (geS2U) and subsequent selenation of the latter derivative to 2-selenouridine (Se2U) in the tRNA chain. The protein is tRNA 2-selenouridine synthase of Pseudomonas paraeruginosa (strain DSM 24068 / PA7) (Pseudomonas aeruginosa (strain PA7)).